We begin with the raw amino-acid sequence, 155 residues long: MRKNAAPKRPVVKDPVYNSEQVTMLVNKILRDGKKSTAERIVYGALEVCREKTGTDPVGTLEKALGNIRPDLEVRSRRVGGATYQVPVEVKPARSNTLALRWLVTFTRQRRENSMIERLANEILDASNGLGASVKRREDTHKMAEANRAFAHYRW.

Belongs to the universal ribosomal protein uS7 family. In terms of assembly, part of the 30S ribosomal subunit. Contacts proteins S9 and S11.

Functionally, one of the primary rRNA binding proteins, it binds directly to 16S rRNA where it nucleates assembly of the head domain of the 30S subunit. Is located at the subunit interface close to the decoding center, probably blocks exit of the E-site tRNA. The chain is Small ribosomal subunit protein uS7 from Corynebacterium aurimucosum (strain ATCC 700975 / DSM 44827 / CIP 107346 / CN-1) (Corynebacterium nigricans).